A 417-amino-acid chain; its full sequence is Transcobalamin-1 (417 aa).

The N-terminal stretch at methionine 1–serine 25 is a signal peptide. Residues glutamine 24–lysine 308 form a globular N-terminal alpha domain region. N-linked (GlcNAc...) asparagine glycosylation is present at asparagine 90. Threonine 143–glutamine 147 lines the cyanocob(III)alamin pocket. A disulfide bridge connects residues cysteine 156 and cysteine 198. Asparagine 161, asparagine 166, and asparagine 179 each carry an N-linked (GlcNAc...) asparagine glycan. Aspartate 187 and glutamine 287 together coordinate cyanocob(III)alamin. A flexible linker region spans residues valine 309–glutamate 327. N-linked (GlcNAc...) asparagine glycosylation is found at asparagine 312, asparagine 328, asparagine 345, and asparagine 360. A globular C-terminal beta domain region spans residues asparagine 328–isoleucine 417. Residues tyrosine 376 to isoleucine 377 and tryptophan 393 to histidine 395 each bind cyanocob(III)alamin.

The protein belongs to the eukaryotic cobalamin transport proteins family. In terms of processing, contains about 30% carbohydrates. In terms of tissue distribution, haptocorrins are a family of cobalamin-binding glycoproteins found in blood, salivary and mucosal secretions.

It is found in the secreted. Functionally, binds vitamin B12 with femtomolar affinity and protects it from the acidic environment of the stomach. Binds to cobalamin and to cobalamin analogs such as cobinamide. The chain is Transcobalamin-1 (TCN1) from Sus scrofa (Pig).